The sequence spans 84 residues: Putative defensin-like protein 63 (84 aa).

A signal peptide spans 1-21 (MDIRKTYVIIFFVGILTISFS). 4 cysteine pairs are disulfide-bonded: cysteine 40–cysteine 81, cysteine 44–cysteine 67, cysteine 53–cysteine 79, and cysteine 57–cysteine 80.

It belongs to the DEFL family.

The protein resides in the secreted. This Arabidopsis thaliana (Mouse-ear cress) protein is Putative defensin-like protein 63.